Here is a 74-residue protein sequence, read N- to C-terminus: CLAVATA3/ESR (CLE)-related protein 1 (74 aa).

The signal sequence occupies residues 1–22; that stretch reads MANLKFLLCLFLICVSLSRSSA. Asparagine 59 is a glycosylation site (N-linked (GlcNAc...) asparagine). A hydroxyproline mark is found at proline 66 and proline 69. Proline 69 carries O-linked (Ara...) hydroxyproline glycosylation.

This sequence belongs to the CLV3/ESR signal peptide family. In terms of processing, the O-glycosylation (arabinosylation) of the hydroxyproline Pro-69 enhances binding affinity of the CLE1p peptide for its receptor. Mostly expressed in roots and seedlings, and, to a lower extent, in stems and apex.

It is found in the secreted. The protein localises to the extracellular space. Its function is as follows. Extracellular signal peptide that regulates cell fate. This Arabidopsis thaliana (Mouse-ear cress) protein is CLAVATA3/ESR (CLE)-related protein 1.